The sequence spans 379 residues: Transaminase htyB (379 aa).

R92 contacts pyridoxal 5'-phosphate. K203 carries the N6-(pyridoxal phosphate)lysine modification. E239 lines the pyridoxal 5'-phosphate pocket.

The protein belongs to the class-IV pyridoxal-phosphate-dependent aminotransferase family. Pyridoxal 5'-phosphate serves as cofactor.

It functions in the pathway antifungal biosynthesis. In terms of biological role, transaminase; part of the gene cluster that mediates the de novo generation of L-homotyrosine from acetyl-CoA and 4-hydroxyphenyl-pyruvate. L-homotyrosine is a building block of echinocandin B, a fungal lipidated cyclic hexapeptide that acts as an antifungal agent. L-homotyrosine 4-hydroxyphenyl-pyruvate first undergoes an aldol-type condensation by htyA with the C-2 of acetyl-CoA followed by the release of CoA to form 2-(4-hydroxybenzyl)-malate. This is followed by isomerization of 2-(4-hydroxy-benzyl)-malate to 3-(4-hydroxybenzyl)-malate by htyD. Thereafter, 3-(4-hydroxybenzyl)-malate undergoes decarboxylation and oxidation to form 2-oxo-4-(4-hydroxybenzyl)butanoic acid, coupled to reduction of NAD(+) to NADH by htyC. The product then undergoes transamination catalyzed by htyB to form L-homotyrosine. The sequence is that of Transaminase htyB from Aspergillus rugulosus (Emericella rugulosa).